The primary structure comprises 336 residues: Ferrochelatase (336 aa).

Fe cation-binding residues include His206 and Glu287.

It belongs to the ferrochelatase family.

It localises to the cytoplasm. It catalyses the reaction heme b + 2 H(+) = protoporphyrin IX + Fe(2+). The protein operates within porphyrin-containing compound metabolism; protoheme biosynthesis; protoheme from protoporphyrin-IX: step 1/1. Functionally, catalyzes the ferrous insertion into protoporphyrin IX. In Neisseria meningitidis serogroup A / serotype 4A (strain DSM 15465 / Z2491), this protein is Ferrochelatase.